The chain runs to 237 residues: Cobalt-precorrin-2 C(20)-methyltransferase (237 aa).

It belongs to the precorrin methyltransferase family. As to quaternary structure, homodimer.

It carries out the reaction Co-precorrin-2 + S-adenosyl-L-methionine = Co-precorrin-3 + S-adenosyl-L-homocysteine + H(+). Its pathway is cofactor biosynthesis; adenosylcobalamin biosynthesis; cob(II)yrinate a,c-diamide from sirohydrochlorin (anaerobic route): step 2/10. Its function is as follows. Methylates cobalt-precorrin-2 at the C-20 position to produce cobalt-precorrin-3A in the anaerobic cobalamin biosynthesis pathway. This Salmonella typhimurium (strain LT2 / SGSC1412 / ATCC 700720) protein is Cobalt-precorrin-2 C(20)-methyltransferase (cbiL).